The following is a 344-amino-acid chain: Putative transport protein sll0060 (344 aa).

Helical transmembrane passes span 14 to 34 (LWIGLTLPLCLLNGWVLLQIL), 41 to 61 (LRIFIIANLVAFILGYPVRWL), 72 to 92 (AVALVLLTTAIILAVIGLLVI), 155 to 175 (LINLLIWTAGSLVEAGFIFIM), 215 to 235 (IGQATVAALLGVSLIISLSIF), 237 to 257 (VPLALLFGMFVGFMAFFPFGG), 262 to 282 (VLISIIASFQSIWLGIKVLAI), and 310 to 330 (ILLSLMIGAKVAGLLGILVAI).

Belongs to the autoinducer-2 exporter (AI-2E) (TC 2.A.86) family.

The protein localises to the cell membrane. This Synechocystis sp. (strain ATCC 27184 / PCC 6803 / Kazusa) protein is Putative transport protein sll0060.